A 595-amino-acid polypeptide reads, in one-letter code: Putative terpenoid synthase 16 (595 aa).

Mg(2+) contacts are provided by Asp349, Asp353, Asn494, and Asp502. Residues 349–353 (DDTCD) carry the DDXXD motif motif.

Belongs to the terpene synthase family. Tpsa subfamily. Requires Mg(2+) as cofactor. It depends on Mn(2+) as a cofactor.

It localises to the cytoplasm. It participates in secondary metabolite biosynthesis; terpenoid biosynthesis. This chain is Putative terpenoid synthase 16 (TPS16), found in Arabidopsis thaliana (Mouse-ear cress).